The following is an 83-amino-acid chain: Small ribosomal subunit protein bS16 (83 aa).

This sequence belongs to the bacterial ribosomal protein bS16 family.

The chain is Small ribosomal subunit protein bS16 from Thermosynechococcus vestitus (strain NIES-2133 / IAM M-273 / BP-1).